A 613-amino-acid polypeptide reads, in one-letter code: Carotenoid dioxygenase (613 aa).

A disordered region spans residues 1-25; that stretch reads MSPHEVIGTVPKNSTTFRTQADEHD. The Fe(2+) site is built by His-261, His-313, His-383, and His-595.

Belongs to the carotenoid oxygenase family. It depends on Fe(2+) as a cofactor.

The protein resides in the cytoplasm. It is found in the cytosol. The catalysed reaction is torulene + O2 = 4'-apo-beta-carotenal + 3-methyl-2-butenal. It participates in carotenoid biosynthesis. In terms of biological role, torulene dioxygenase; part of pathway that mediates the biosynthesis of neurosporaxanthin, a carboxylic apocarotenoid acting as an essential protective pigments and leading to orange pigmentation. Cao-2 mediates the cleavage of torulene into beta-apo-4'-carotenal, the aldehyde corresponding to the acidic neurosporaxanthin. Is not able to use gamma-carotene (that it is not desaturated at the C4'-C5' bond) as substrate, which suggests a high specificity of cao-2 in cleaving the C4'-C5' double bond. Neurosporaxanthin is synthesized from geranyl-geranyl pyrophosphate (GGPP) through several enzymatic activities. Phytoene synthase activity performed by the bifunctional enzyme al-2 first produces phytoene from geranyl-geranyl pyrophosphate (GGPP). The phytoene dehydrogenase al-1 then introduces 5 desaturations to lead to 3,4-didehydrolycopene via the intermediates phytofluene, zeta-carotene, neurosporene and lycopene. Al-2 cyclase activity then converts 3,4-didehydrolycopene into torulene. Al-2 can also convet lycopene into gamma-carotene which in turn is converted to beta-carotene by an additional al-2 cyclization reaction. Torulene is the substrate of the dioxidase cao-2 that breaks the molecule, removing five carbon atoms to yield beta-apo-4'-carotenal, whereas the aldehyde dehydrogenase ylo-1 mediates the last step by converting beta-apo-4'-carotenal into neurosporaxanthin. The sequence is that of Carotenoid dioxygenase from Neurospora crassa (strain ATCC 24698 / 74-OR23-1A / CBS 708.71 / DSM 1257 / FGSC 987).